Consider the following 411-residue polypeptide: G2/mitotic-specific cyclin cig2 (411 aa).

The Destruction box motif lies at 51-60; that stretch reads RTVLSDVSNV. A disordered region spans residues 57–89; sequence VSNVGKNNADEKDTKKAKRSFDESNLSTNEEAD. Residues 64–78 are compositionally biased toward basic and acidic residues; that stretch reads NADEKDTKKAKRSFD. The 127-residue stretch at 139–265 folds into the Cyclin N-terminal domain; the sequence is EIFEYIRKLD…MLNVLNFDLS (127 aa). An interaction with pop1 region spans residues 181–273; that stretch reads SNFCLMPETL…LSYPSPLNFL (93 aa).

It belongs to the cyclin family. Cyclin AB subfamily. As to quaternary structure, associates with cdc2, res2 and rum1. Interacts with pop1 only when phosphorylated. Phosphorylated.

Its subcellular location is the nucleus. The protein resides in the cytoplasm. It localises to the cytoskeleton. It is found in the microtubule organizing center. The protein localises to the spindle pole body. Its function is as follows. Essential for the control of the cell cycle at the G2/M and G1/S (mitosis) transition. Interacts with the cdc2 protein kinase to form MPF. Interaction with res2 promotes the phosphorylation of res1 and inhibits MBF-dependent gene transcription. Forms an autoregulating feedback-inhibition loop with MBF which is important for normal regulation of the cell cycle. G2/M cyclins accumulate steadily during G2 and are abruptly destroyed at mitosis. Negatively regulates conjugation via interacting with cell cycle 'start' genes. Degraded by skp1, pop1 and pop2 in the G2 and M phases of the cell cycle. This Schizosaccharomyces pombe (strain 972 / ATCC 24843) (Fission yeast) protein is G2/mitotic-specific cyclin cig2 (cig2).